The following is a 546-amino-acid chain: Phenylalanine--tRNA ligase beta subunit (546 aa).

Positions 266-342 (LAPAERVVSV…IAYGIENFDA (77 aa)) constitute a B5 domain. Mg(2+) is bound by residues D320, D326, E329, and D330.

It belongs to the phenylalanyl-tRNA synthetase beta subunit family. Type 2 subfamily. As to quaternary structure, tetramer of two alpha and two beta subunits. The cofactor is Mg(2+).

It localises to the cytoplasm. It carries out the reaction tRNA(Phe) + L-phenylalanine + ATP = L-phenylalanyl-tRNA(Phe) + AMP + diphosphate + H(+). The polypeptide is Phenylalanine--tRNA ligase beta subunit (Methanoculleus marisnigri (strain ATCC 35101 / DSM 1498 / JR1)).